The chain runs to 520 residues: Probable glycine dehydrogenase (decarboxylating) subunit 2 (520 aa).

The tract at residues 1-29 (MWRQSRWNEPLITEMSRRGRRGALPPRPD) is disordered. Position 279 is an N6-(pyridoxal phosphate)lysine (lysine 279).

Belongs to the GcvP family. C-terminal subunit subfamily. The glycine cleavage system is composed of four proteins: P, T, L and H. In this organism, the P 'protein' is a heterodimer of two subunits. Requires pyridoxal 5'-phosphate as cofactor.

It catalyses the reaction N(6)-[(R)-lipoyl]-L-lysyl-[glycine-cleavage complex H protein] + glycine + H(+) = N(6)-[(R)-S(8)-aminomethyldihydrolipoyl]-L-lysyl-[glycine-cleavage complex H protein] + CO2. Functionally, the glycine cleavage system catalyzes the degradation of glycine. The P protein binds the alpha-amino group of glycine through its pyridoxal phosphate cofactor; CO(2) is released and the remaining methylamine moiety is then transferred to the lipoamide cofactor of the H protein. This Aeropyrum pernix (strain ATCC 700893 / DSM 11879 / JCM 9820 / NBRC 100138 / K1) protein is Probable glycine dehydrogenase (decarboxylating) subunit 2.